A 435-amino-acid chain; its full sequence is Serine--tRNA ligase (435 aa).

Residue 241-243 (TAE) coordinates L-serine. Residue 272-274 (RAE) participates in ATP binding. Glu-295 provides a ligand contact to L-serine. 359-362 (EISS) provides a ligand contact to ATP. Ser-395 is an L-serine binding site.

It belongs to the class-II aminoacyl-tRNA synthetase family. Type-1 seryl-tRNA synthetase subfamily. As to quaternary structure, homodimer. The tRNA molecule binds across the dimer.

The protein resides in the cytoplasm. The enzyme catalyses tRNA(Ser) + L-serine + ATP = L-seryl-tRNA(Ser) + AMP + diphosphate + H(+). The catalysed reaction is tRNA(Sec) + L-serine + ATP = L-seryl-tRNA(Sec) + AMP + diphosphate + H(+). The protein operates within aminoacyl-tRNA biosynthesis; selenocysteinyl-tRNA(Sec) biosynthesis; L-seryl-tRNA(Sec) from L-serine and tRNA(Sec): step 1/1. Functionally, catalyzes the attachment of serine to tRNA(Ser). Is also able to aminoacylate tRNA(Sec) with serine, to form the misacylated tRNA L-seryl-tRNA(Sec), which will be further converted into selenocysteinyl-tRNA(Sec). The sequence is that of Serine--tRNA ligase from Haemophilus ducreyi (strain 35000HP / ATCC 700724).